We begin with the raw amino-acid sequence, 221 residues long: MRDAALRYPNILFDLDGTLTDPREGITRSVQFALARLGIDEPDLARLEHFIGPPLLQCFMQTYGFDEARAWEAVNHYRERFRVTGLYENRVFDGIPELLEALVGRGHTLYVATSKPGVFAREIARHFAFDRHFKAIYGSELDGTRTHKEELIRHLLDSEGLAAEHCLMIGDRMHDLLGASRNGVACIGVGYGFGSEDELRAHQPTHYCADLAALRQVLESH.

The Nucleophile role is filled by D14.

The protein belongs to the HAD-like hydrolase superfamily. Mn(2+) serves as cofactor. Mg(2+) is required as a cofactor.

It catalyses the reaction a ribonucleoside 5'-phosphate + H2O = a ribonucleoside + phosphate. In terms of biological role, specifically dephosphorylates nucleoside 5'-monophosphates to nucleosides and inorganic phosphate. Displays high activity toward 5'-UMP and 5'-IMP, significant activity against 5'-XMP and 5'-TMP, and low activity against 5'-CMP. This is 5'-nucleotidase from Pseudomonas aeruginosa (strain ATCC 15692 / DSM 22644 / CIP 104116 / JCM 14847 / LMG 12228 / 1C / PRS 101 / PAO1).